The following is a 490-amino-acid chain: Cytochrome P450 71A19 (490 aa).

The chain crosses the membrane as a helical span at residues 3–23; it reads IILVTLCLTTLLALLLLKSIL. Heme is bound at residue cysteine 433.

Belongs to the cytochrome P450 family. The cofactor is heme.

It is found in the membrane. This Arabidopsis thaliana (Mouse-ear cress) protein is Cytochrome P450 71A19 (CYP71A19).